The sequence spans 235 residues: Ribonuclease PH (235 aa).

Phosphate-binding positions include arginine 86 and 124–126; that span reads GTR.

It belongs to the RNase PH family. In terms of assembly, homohexameric ring arranged as a trimer of dimers.

The catalysed reaction is tRNA(n+1) + phosphate = tRNA(n) + a ribonucleoside 5'-diphosphate. Phosphorolytic 3'-5' exoribonuclease that plays an important role in tRNA 3'-end maturation. Removes nucleotide residues following the 3'-CCA terminus of tRNAs; can also add nucleotides to the ends of RNA molecules by using nucleoside diphosphates as substrates, but this may not be physiologically important. Probably plays a role in initiation of 16S rRNA degradation (leading to ribosome degradation) during starvation. In Francisella tularensis subsp. holarctica (strain FTNF002-00 / FTA), this protein is Ribonuclease PH.